A 1144-amino-acid chain; its full sequence is Ribonucleoside-diphosphate reductase large subunit (1144 aa).

Residues 1-33 (MANRPAASALAGARSPSERQEPREPEVAPPGGD) form a disordered region. Positions 16–26 (PSERQEPREPE) are enriched in basic and acidic residues. The RIP homotypic interaction motif (RHIM) motif lies at 55–75 (AYRISDSSFVQCGSNCSMIID). A disordered region spans residues 118 to 324 (SGPSATTSVG…TDPGYPVPLE (207 aa)). The span at 119–132 (GPSATTSVGTQTSG) shows a compositional bias: polar residues. Pro residues predominate over residues 141 to 159 (TPEPQGPQAVPPPPPPPFP). Basic and acidic residues predominate over residues 164–179 (CCARRDARGGAEKDVG). The segment covering 192–204 (SETEDSDSSDEDT) has biased composition (acidic residues). Low complexity-rich tracts occupy residues 205–216 (GSGSETLSRSSS) and 279–305 (GSAT…DVAP). Substrate is bound by residues Thr573, 588–589 (SC), Gly619, 798–802 (NLCTE), and 975–979 (PTAAS). Residues Cys589 and Cys815 are joined by a disulfide bond. The active-site Proton acceptor is the Asn798. Catalysis depends on Cys800, which acts as the Cysteine radical intermediate. The active-site Proton acceptor is the Glu802.

The protein belongs to the ribonucleoside diphosphate reductase large chain family. In terms of assembly, heterotetramer composed of a homodimer of the large subunit (R1) and a homodimer of the small subunit (R2). Larger multisubunit protein complex are also active, composed of (R1)n(R2)n. May self-assemble (via RIP homotypic interaction motif/RHIM) into homomeric fibrillar amyloid structures. Interacts (via RHIM) with human RIPK1 (via RHIM). Interacts (via RHIM) with human RIPK3 (via RHIM). May interact (via RHIM) with human ZBP1 (via RHIM). Interacts (via C-terminus) with host CASP8.

The catalysed reaction is a 2'-deoxyribonucleoside 5'-diphosphate + [thioredoxin]-disulfide + H2O = a ribonucleoside 5'-diphosphate + [thioredoxin]-dithiol. Functionally, ribonucleoside-diphosphate reductase holoenzyme that provides the precursors necessary for viral DNA synthesis. Allows virus growth in non-dividing cells, as well as reactivation from latency in infected hosts. Catalyzes the biosynthesis of deoxyribonucleotides from the corresponding ribonucleotides. The N-terminal region confers antiapoptotic activity in differentiated cells such as neurons and is important for viral reactivation to increase neural survivability. Prevents host necroptosis by targeting host RIPK1 and RIPK3, thereby hampering the formation of necroptotic RIPK1-RIPK3 complexes. May form hetero-amyloid structures with host proteins RIPK3 or ZBP1, thereby preventing RIPK3- and ZBP1-mediated necroptosis. In addition, inhibits extrinsic apoptosis by targeting host CASP8. This chain is Ribonucleoside-diphosphate reductase large subunit, found in Homo sapiens (Human).